The sequence spans 723 residues: MIYQAKTLQVKQLANGIAELSFCAPASVNKLDLHTLESLDKALDALAADSSVKGLLLSSDKEAFIVGADITEFLGLFAKPEAELDEWLQFANRIFNKLEDLPFPTLSALKGHTLGGGCECVLATDFRIGDATTSIGLPETKLGIMPGFGGTVRLPRLIGADSAMEIITQGKACRAEEALKVGLLDAIVDSDKLIDSAITTLTQAIEEKLDWQKRRQQKTSALTLSKLEAMMSFTMAKGMVAQVAGKHYPAPMTSVVTIEEAARLPRDAALDIERKHFIKLAKSTEAQALVGIFLNDQYIKGLAKQSAKAASQDTQHAAVLGAGIMGGGIAYQSALKGVPVLMKDIAPHSLELGMTEAAKLLNKQLERGKIDGFKMAGILASITPSLHYAGIDQADVIVEAVVENPKVKAAVLSEVEGLVDAETILTSNTSTIPINLLAKSLKRPQNFCGMHFFNPVHRMPLVEIIRGEHTSEDTINRVVAYAAKMGKSPIVVNDCPGFFVNRVLFPYFAGFSLLMRDGANFTEIDKVMERQFGWPMGPAYLLDVVGIDTAHHAQAVMAEGFPTRMAKSGREAIDALYEAKKFGQKNGSGFYQYTVDKKGKPKKAFSDDVLAILAPVCGAPQNFDPQTLIERTMIPMINEVVLCLEEGIIASAQEADMALVYGLGFPPFRGGVFRYLDTIGIANYVAMAEKYADLGALYQVPQLLKNMAQQGTSFYSAQQASAL.

The interval 1–189 (MIYQAKTLQV…KVGLLDAIVD (189 aa)) is enoyl-CoA hydratase/isomerase. Residue aspartate 296 coordinates substrate. The interval 311–723 (SQDTQHAAVL…FYSAQQASAL (413 aa)) is 3-hydroxyacyl-CoA dehydrogenase. NAD(+) is bound by residues methionine 325, aspartate 344, 401-403 (VVE), lysine 408, and serine 430. The active-site For 3-hydroxyacyl-CoA dehydrogenase activity is the histidine 451. Asparagine 454 is an NAD(+) binding site. Residues asparagine 501 and tyrosine 661 each contribute to the substrate site.

In the N-terminal section; belongs to the enoyl-CoA hydratase/isomerase family. The protein in the C-terminal section; belongs to the 3-hydroxyacyl-CoA dehydrogenase family. As to quaternary structure, heterotetramer of two alpha chains (FadB) and two beta chains (FadA).

It catalyses the reaction a (3S)-3-hydroxyacyl-CoA + NAD(+) = a 3-oxoacyl-CoA + NADH + H(+). The enzyme catalyses a (3S)-3-hydroxyacyl-CoA = a (2E)-enoyl-CoA + H2O. The catalysed reaction is a 4-saturated-(3S)-3-hydroxyacyl-CoA = a (3E)-enoyl-CoA + H2O. It carries out the reaction (3S)-3-hydroxybutanoyl-CoA = (3R)-3-hydroxybutanoyl-CoA. It catalyses the reaction a (3Z)-enoyl-CoA = a 4-saturated (2E)-enoyl-CoA. The enzyme catalyses a (3E)-enoyl-CoA = a 4-saturated (2E)-enoyl-CoA. It functions in the pathway lipid metabolism; fatty acid beta-oxidation. Its function is as follows. Involved in the aerobic and anaerobic degradation of long-chain fatty acids via beta-oxidation cycle. Catalyzes the formation of 3-oxoacyl-CoA from enoyl-CoA via L-3-hydroxyacyl-CoA. It can also use D-3-hydroxyacyl-CoA and cis-3-enoyl-CoA as substrate. This Vibrio cholerae serotype O1 (strain ATCC 39541 / Classical Ogawa 395 / O395) protein is Fatty acid oxidation complex subunit alpha.